The primary structure comprises 699 residues: Homeobox-leucine zipper protein HDG8 (699 aa).

Residues 1 to 31 (MDNNGGGSSGNEQYTSGDAKQNGKRTCHRHT) are disordered. Over residues 10-19 (GNEQYTSGDA) the composition is skewed to polar residues. The segment covering 22–31 (NGKRTCHRHT) has biased composition (basic residues). Positions 23–82 (GKRTCHRHTPQQIQRLEAYFKECPHPDERQRNQLCRELKLEPDQIKFWFQNKRTQSKTQE) form a DNA-binding region, homeobox. A coiled-coil region spans residues 89–149 (LLRGENETLQ…LKDHRDRISN (61 aa)). The region spanning 204–438 (AETDMSLLSE…LERMCERMAL (235 aa)) is the START domain.

The protein belongs to the HD-ZIP homeobox family. Class IV subfamily. As to quaternary structure, interacts with ANT. As to expression, expressed in the embryo at early stage and in the endosperm.

Its subcellular location is the nucleus. Functionally, probable transcription factor. This chain is Homeobox-leucine zipper protein HDG8, found in Arabidopsis thaliana (Mouse-ear cress).